The following is a 39-amino-acid chain: MAGGGRIPLWIVATVAGTGALVVVGLFFYGAYAGLGSSL.

Residues 7-27 (IPLWIVATVAGTGALVVVGLF) form a helical membrane-spanning segment.

Belongs to the PsbJ family. As to quaternary structure, PSII is composed of 1 copy each of membrane proteins PsbA, PsbB, PsbC, PsbD, PsbE, PsbF, PsbH, PsbI, PsbJ, PsbK, PsbL, PsbM, PsbT, PsbX, PsbY, PsbZ, Psb30/Ycf12, peripheral proteins PsbO, CyanoQ (PsbQ), PsbU, PsbV and a large number of cofactors. It forms dimeric complexes.

It localises to the cellular thylakoid membrane. In terms of biological role, one of the components of the core complex of photosystem II (PSII). PSII is a light-driven water:plastoquinone oxidoreductase that uses light energy to abstract electrons from H(2)O, generating O(2) and a proton gradient subsequently used for ATP formation. It consists of a core antenna complex that captures photons, and an electron transfer chain that converts photonic excitation into a charge separation. In Synechococcus sp. (strain ATCC 27144 / PCC 6301 / SAUG 1402/1) (Anacystis nidulans), this protein is Photosystem II reaction center protein J.